An 800-amino-acid polypeptide reads, in one-letter code: DNA topoisomerase 4 subunit A (800 aa).

Residues 31–495 form the Topo IIA-type catalytic domain; that stretch reads LPDVRDGLKP…EIEEIKIDKE (465 aa). Residue Tyr-119 is the O-(5'-phospho-DNA)-tyrosine intermediate of the active site.

This sequence belongs to the type II topoisomerase GyrA/ParC subunit family. ParC type 2 subfamily. As to quaternary structure, heterotetramer composed of ParC and ParE.

The protein localises to the cell membrane. It carries out the reaction ATP-dependent breakage, passage and rejoining of double-stranded DNA.. Its function is as follows. Topoisomerase IV is essential for chromosome segregation. It relaxes supercoiled DNA. Performs the decatenation events required during the replication of a circular DNA molecule. The protein is DNA topoisomerase 4 subunit A of Staphylococcus aureus.